The chain runs to 300 residues: Transcription initiation factor IIB (300 aa).

The TFIIB-type zinc-finger motif lies at 2–34 (TKQKVCPVCGSTEFIYDPERGEIVCARCGYVIE). The Zn(2+) site is built by cysteine 7, cysteine 10, cysteine 26, and cysteine 29. A run of 2 repeats spans residues 114-197 (SELD…ARNL) and 210-291 (DYVN…ELVE).

Belongs to the TFIIB family.

Stabilizes TBP binding to an archaeal box-A promoter. Also responsible for recruiting RNA polymerase II to the pre-initiation complex (DNA-TBP-TFIIB). The polypeptide is Transcription initiation factor IIB (Pyrococcus horikoshii (strain ATCC 700860 / DSM 12428 / JCM 9974 / NBRC 100139 / OT-3)).